The following is a 368-amino-acid chain: 4-hydroxy-3-methylbut-2-en-1-yl diphosphate synthase (flavodoxin) (368 aa).

Cys271, Cys274, Cys306, and Glu313 together coordinate [4Fe-4S] cluster.

The protein belongs to the IspG family. Requires [4Fe-4S] cluster as cofactor.

It carries out the reaction (2E)-4-hydroxy-3-methylbut-2-enyl diphosphate + oxidized [flavodoxin] + H2O + 2 H(+) = 2-C-methyl-D-erythritol 2,4-cyclic diphosphate + reduced [flavodoxin]. It functions in the pathway isoprenoid biosynthesis; isopentenyl diphosphate biosynthesis via DXP pathway; isopentenyl diphosphate from 1-deoxy-D-xylulose 5-phosphate: step 5/6. Functionally, converts 2C-methyl-D-erythritol 2,4-cyclodiphosphate (ME-2,4cPP) into 1-hydroxy-2-methyl-2-(E)-butenyl 4-diphosphate. This chain is 4-hydroxy-3-methylbut-2-en-1-yl diphosphate synthase (flavodoxin), found in Histophilus somni (strain 129Pt) (Haemophilus somnus).